Here is a 176-residue protein sequence, read N- to C-terminus: DNA repair RAD52-like protein 1, mitochondrial (176 aa).

A mitochondrion-targeting transit peptide spans 1 to 37; sequence MAGLGLRLKAAKWTLRSGSGAVSREWSSEMGKGVRRF.

The protein belongs to the RAD52 family. As to quaternary structure, interacts with WHY2. Expressed in root vascular tissue, tips of primary and secondary roots, young leaves, hydathodes, stomatal guard cells, cauline leaves, flower buds, stipules, carpels, pistils and anther filaments.

Its subcellular location is the mitochondrion. It localises to the nucleus. Functionally, plant-specific single-stranded DNA-binding protein required for efficient heterologous recombination-dependent DNA repair in nuclear and mitochondrial compartments. Forms large nucleo-protein complexes with WHY2 in mitochondria. Binds ssDNA with high affinity, but with little sequence specificity. Involved in double-stranded DNA break repair. Involved in the hydrolytic splicing pathway in mitochondrion. Facilitates the excision of two cis-spliced group II introns, NAD1 intron 2 and NAD2 intron 1. This Arabidopsis thaliana (Mouse-ear cress) protein is DNA repair RAD52-like protein 1, mitochondrial.